Consider the following 115-residue polypeptide: Gonadotropin subunit beta-2 (115 aa).

Cystine bridges form between Cys6/Cys54, Cys20/Cys69, Cys23/Cys107, Cys31/Cys85, Cys35/Cys87, and Cys90/Cys97. An N-linked (GlcNAc...) asparagine glycan is attached at Asn10.

This sequence belongs to the glycoprotein hormones subunit beta family. Heterodimer of an alpha and a beta chain.

The protein resides in the secreted. Functionally, involved in gametogenesis and steroidogenesis. This chain is Gonadotropin subunit beta-2 (cgbb), found in Thunnus obesus (Bigeye tuna).